A 388-amino-acid polypeptide reads, in one-letter code: Succinate--CoA ligase [ADP-forming] subunit beta (388 aa).

The 236-residue stretch at 9–244 (KEILRKFGVA…LDEEDPAEIE (236 aa)) folds into the ATP-grasp domain. Residues K46, 53 to 55 (GRG), E99, A102, and E107 each bind ATP. Mg(2+) contacts are provided by N199 and D213. Substrate contacts are provided by residues N264 and 321–323 (GIM).

This sequence belongs to the succinate/malate CoA ligase beta subunit family. Heterotetramer of two alpha and two beta subunits. Mg(2+) serves as cofactor.

The catalysed reaction is succinate + ATP + CoA = succinyl-CoA + ADP + phosphate. It catalyses the reaction GTP + succinate + CoA = succinyl-CoA + GDP + phosphate. It functions in the pathway carbohydrate metabolism; tricarboxylic acid cycle; succinate from succinyl-CoA (ligase route): step 1/1. Functionally, succinyl-CoA synthetase functions in the citric acid cycle (TCA), coupling the hydrolysis of succinyl-CoA to the synthesis of either ATP or GTP and thus represents the only step of substrate-level phosphorylation in the TCA. The beta subunit provides nucleotide specificity of the enzyme and binds the substrate succinate, while the binding sites for coenzyme A and phosphate are found in the alpha subunit. The sequence is that of Succinate--CoA ligase [ADP-forming] subunit beta from Burkholderia lata (strain ATCC 17760 / DSM 23089 / LMG 22485 / NCIMB 9086 / R18194 / 383).